The primary structure comprises 341 residues: ATPase GET3 (341 aa).

34-41 (KGGVGKTT) contacts ATP. D63 is a catalytic residue. Positions 245 and 272 each coordinate ATP. The Zn(2+) site is built by C283 and C286.

The protein belongs to the arsA ATPase family. Homodimer.

It is found in the cytoplasm. The protein localises to the endoplasmic reticulum. ATPase required for the post-translational delivery of tail-anchored (TA) proteins to the endoplasmic reticulum. Recognizes and selectively binds the transmembrane domain of TA proteins in the cytosol. This complex then targets to the endoplasmic reticulum by membrane-bound receptors, where the tail-anchored protein is released for insertion. This process is regulated by ATP binding and hydrolysis. ATP binding drives the homodimer towards the closed dimer state, facilitating recognition of newly synthesized TA membrane proteins. ATP hydrolysis is required for insertion. Subsequently, the homodimer reverts towards the open dimer state, lowering its affinity for the membrane-bound receptor, and returning it to the cytosol to initiate a new round of targeting. The chain is ATPase GET3 from Paracoccidioides lutzii (strain ATCC MYA-826 / Pb01) (Paracoccidioides brasiliensis).